A 177-amino-acid chain; its full sequence is Probable chemoreceptor glutamine deamidase CheD (177 aa).

It belongs to the CheD family.

The enzyme catalyses L-glutaminyl-[protein] + H2O = L-glutamyl-[protein] + NH4(+). Its function is as follows. Probably deamidates glutamine residues to glutamate on methyl-accepting chemotaxis receptors (MCPs), playing an important role in chemotaxis. The chain is Probable chemoreceptor glutamine deamidase CheD from Pseudomonas syringae pv. syringae (strain B728a).